We begin with the raw amino-acid sequence, 432 residues long: UDP-N-acetylglucosamine 1-carboxyvinyltransferase (432 aa).

22 to 23 (KN) lines the phosphoenolpyruvate pocket. R92 serves as a coordination point for UDP-N-acetyl-alpha-D-glucosamine. The active-site Proton donor is the C116. C116 carries the 2-(S-cysteinyl)pyruvic acid O-phosphothioketal modification. UDP-N-acetyl-alpha-D-glucosamine-binding positions include 121–125 (RPVDQ), D307, and I329.

This sequence belongs to the EPSP synthase family. MurA subfamily.

The protein resides in the cytoplasm. The enzyme catalyses phosphoenolpyruvate + UDP-N-acetyl-alpha-D-glucosamine = UDP-N-acetyl-3-O-(1-carboxyvinyl)-alpha-D-glucosamine + phosphate. The protein operates within cell wall biogenesis; peptidoglycan biosynthesis. Cell wall formation. Adds enolpyruvyl to UDP-N-acetylglucosamine. This is UDP-N-acetylglucosamine 1-carboxyvinyltransferase from Psychrobacter sp. (strain PRwf-1).